Consider the following 486-residue polypeptide: Malonate-semialdehyde dehydrogenase (486 aa).

The NAD(+) site is built by Phe-154, Lys-178, Glu-181, Arg-182, and Ser-231. The active-site Nucleophile is Cys-286. Glu-386 contacts NAD(+).

The protein belongs to the aldehyde dehydrogenase family. IolA subfamily. As to quaternary structure, homotetramer.

It catalyses the reaction 3-oxopropanoate + NAD(+) + CoA + H2O = hydrogencarbonate + acetyl-CoA + NADH + H(+). The catalysed reaction is 2-methyl-3-oxopropanoate + NAD(+) + CoA + H2O = propanoyl-CoA + hydrogencarbonate + NADH + H(+). Its pathway is polyol metabolism; myo-inositol degradation into acetyl-CoA; acetyl-CoA from myo-inositol: step 7/7. Catalyzes the oxidation of malonate semialdehyde (MSA) and methylmalonate semialdehyde (MMSA) into acetyl-CoA and propanoyl-CoA, respectively. Is involved in a myo-inositol catabolic pathway. Bicarbonate, and not CO2, is the end-product of the enzymatic reaction. The polypeptide is Malonate-semialdehyde dehydrogenase (Bacillus cereus (strain G9842)).